The following is a 70-amino-acid chain: Conotoxin TsMLKM-011 (70 aa).

The signal sequence occupies residues M1 to A24. Positions D25–R54 are excised as a propeptide. 3 cysteine pairs are disulfide-bonded: C56/C66, C57/C68, and C62/C69.

Belongs to the conotoxin M superfamily. Expressed by the venom duct.

The protein resides in the secreted. The chain is Conotoxin TsMLKM-011 from Conus tessulatus (Tessellate cone).